Reading from the N-terminus, the 656-residue chain is Threonine--tRNA ligase (656 aa).

A TGS domain is found at 1–64 (MAEAASLTFP…ERSGKIEIIT (64 aa)). The tract at residues 246-548 (DHRRLGREMD…LIENYAGHFP (303 aa)) is catalytic. Positions 342, 393, and 525 each coordinate Zn(2+).

This sequence belongs to the class-II aminoacyl-tRNA synthetase family. In terms of assembly, homodimer. Zn(2+) serves as cofactor.

It is found in the cytoplasm. It carries out the reaction tRNA(Thr) + L-threonine + ATP = L-threonyl-tRNA(Thr) + AMP + diphosphate + H(+). In terms of biological role, catalyzes the attachment of threonine to tRNA(Thr) in a two-step reaction: L-threonine is first activated by ATP to form Thr-AMP and then transferred to the acceptor end of tRNA(Thr). Also edits incorrectly charged L-seryl-tRNA(Thr). The sequence is that of Threonine--tRNA ligase from Chelativorans sp. (strain BNC1).